Here is a 164-residue protein sequence, read N- to C-terminus: Microfibrillar-associated protein 5 (164 aa).

A signal peptide spans 1 to 28 (MLFLGQKALLLVLAISIPSDWLPLGVSG). The Cell attachment site signature appears at 30–32 (RGD). An N-linked (GlcNAc...) asparagine glycan is attached at Asn-70.

The protein belongs to the MFAP family. Interacts with TGFB2. Interacts with BMP2. Interacts with FBN1 (via N-terminal domain) and FBN2. Forms intermolecular disulfide bonds either with other MAGP-2 molecules or with other components of the microfibrils.

The protein localises to the secreted. It is found in the extracellular space. Its subcellular location is the extracellular matrix. May play a role in hematopoiesis. In the cardiovascular system, could regulate growth factors or participate in cell signaling in maintaining large vessel integrity. Component of the elastin-associated microfibrils. The chain is Microfibrillar-associated protein 5 (Mfap5) from Mus musculus (Mouse).